The primary structure comprises 533 residues: Chromosomal replication initiator protein DnaA (533 aa).

Residues 1–72 are domain I, interacts with DnaA modulators; sequence MNDFWQHCSA…DLARDFWNAP (72 aa). The interval 72–196 is domain II; sequence PIEVQFVLDP…EAADSMYERS (125 aa). The segment at 83–110 is disordered; that stretch reads AGQRSPAGATPLAPRAPLPSANPAPVGP. Residues 96–110 show a composition bias toward pro residues; sequence PRAPLPSANPAPVGP. The segment at 197-413 is domain III, AAA+ region; the sequence is KLNPVLTFDN…GALRKILAYS (217 aa). ATP contacts are provided by Gly241, Gly243, Lys244, and Thr245. A domain IV, binds dsDNA region spans residues 414 to 533; it reads KFHGREITIE…LHVLEQTLKG (120 aa).

It belongs to the DnaA family. Oligomerizes as a right-handed, spiral filament on DNA at oriC.

Its subcellular location is the cytoplasm. Its function is as follows. Plays an essential role in the initiation and regulation of chromosomal replication. ATP-DnaA binds to the origin of replication (oriC) to initiate formation of the DNA replication initiation complex once per cell cycle. Binds the DnaA box (a 9 base pair repeat at the origin) and separates the double-stranded (ds)DNA. Forms a right-handed helical filament on oriC DNA; dsDNA binds to the exterior of the filament while single-stranded (ss)DNA is stabiized in the filament's interior. The ATP-DnaA-oriC complex binds and stabilizes one strand of the AT-rich DNA unwinding element (DUE), permitting loading of DNA polymerase. After initiation quickly degrades to an ADP-DnaA complex that is not apt for DNA replication. Binds acidic phospholipids. This Burkholderia mallei (strain NCTC 10247) protein is Chromosomal replication initiator protein DnaA.